The sequence spans 154 residues: Ribosome maturation factor RimP (154 aa).

It belongs to the RimP family.

The protein resides in the cytoplasm. Its function is as follows. Required for maturation of 30S ribosomal subunits. This chain is Ribosome maturation factor RimP, found in Yersinia pseudotuberculosis serotype O:1b (strain IP 31758).